Here is a 160-residue protein sequence, read N- to C-terminus: Invasion protein IagB (160 aa).

An N-terminal signal peptide occupies residues Met-1–Ala-19.

Belongs to the IagB/IpgF/P19 family.

This Salmonella typhi protein is Invasion protein IagB (iagB).